We begin with the raw amino-acid sequence, 266 residues long: Interleukin-1 beta (266 aa).

A propeptide spanning residues 1-114 is cleaved from the precursor; it reads MAAVPELSSE…DTWDEEYESD (114 aa).

This sequence belongs to the IL-1 family. As to quaternary structure, monomer. In its precursor form, weakly interacts with full-length MEFV; the mature cytokine does not interact at all. Interacts with integrins ITGAV:ITGBV and ITGA5:ITGB1; integrin-binding is required for IL1B signaling. Interacts with cargo receptor TMED10; the interaction is direct and is required for the secretion of IL1B mature form. Interacts with HSP90AB1; the interaction facilitates cargo translocation into the ERGIC. Interacts with HSP90B1; the interaction facilitates cargo translocation into the ERGIC.

The protein resides in the cytoplasm. It localises to the cytosol. The protein localises to the secreted. It is found in the lysosome. Its subcellular location is the extracellular exosome. Its function is as follows. Potent pro-inflammatory cytokine. Initially discovered as the major endogenous pyrogen, induces prostaglandin synthesis, neutrophil influx and activation, T-cell activation and cytokine production, B-cell activation and antibody production, and fibroblast proliferation and collagen production. Promotes Th17 differentiation of T-cells. Synergizes with IL12/interleukin-12 to induce IFNG synthesis from T-helper 1 (Th1) cells. Plays a role in angiogenesis by inducing VEGF production synergistically with TNF and IL6. Involved in transduction of inflammation downstream of pyroptosis: its mature form is specifically released in the extracellular milieu by passing through the gasdermin-D (GSDMD) pore. This chain is Interleukin-1 beta (IL1B), found in Cavia porcellus (Guinea pig).